The chain runs to 76 residues: Anaredoxin (76 aa).

Positions 24-66 (CMVCWEVNSKANGHHLIPYSEGGSADIQNMMTLCPSCHTKYHK) constitute an HNH domain.

It belongs to the HNH nuclease family.

Functionally, putative P-450 reductase. The polypeptide is Anaredoxin (Nostoc sp. (strain PCC 7120 / SAG 25.82 / UTEX 2576)).